We begin with the raw amino-acid sequence, 419 residues long: Acetyltransferase fsoF (419 aa).

Asparagine 2 carries N-linked (GlcNAc...) asparagine glycosylation. The next 2 helical transmembrane spans lie at 4-24 (TIIS…VVGF) and 62-82 (AFLG…AILS). The segment at 89–114 (QSPTSSLGGLIPPTTRDTPKTQNNAT) is disordered. Residues asparagine 112 and asparagine 169 are each glycosylated (N-linked (GlcNAc...) asparagine). The next 4 membrane-spanning stretches (helical) occupy residues 230-250 (YWAI…VVAV), 314-334 (YVFM…SDVS), 337-357 (IPLG…GIML), and 386-406 (VSGP…WIYM).

The protein belongs to the wax synthase family.

Its subcellular location is the membrane. The enzyme catalyses 3-O-(beta-D-glucopyranosyl)-2alpha-hydroxyisomotiol + acetyl-CoA = 3-O-(beta-D-glucopyranosyl)-2alpha-acetoxyisomotiol + CoA. It carries out the reaction 2-deacetylfuscoatroside + acetyl-CoA = fuscoatroside + CoA. Its pathway is secondary metabolite biosynthesis; terpenoid biosynthesis. Functionally, terpene cyclase-glycosyl transferase fusion protein; part of the gene cluster that mediates the biosynthesis of the enfumafungin-type antibiotic, fuscoatroside. Within the pathway, fsoF catalyzes the acetylation of C2-alpha-OH following the C2 hydroxylation by the cytochrome monooxygenase fsoD. The fuscoatroside biosynthesis is initiated by the cyclization of 2,3(S)-oxidosqualene through FsoA's terpene cyclase (TC) domain, leading to the formation of the fernane skeleton isomotiol, harboring a fernane triterpene skeleton with a C8-C9 double bond. Subsequently, C2-alpha-hydroxylation mediated by fsoD results in the production of 2-alpha-hydroxy-isomotiol, which is further acetylated by fsoF. The glycosyltransferase (GT) domain of FsoA may convert isomotiol, 2-alpha-hydroxy-isomotiol, and the acetylated derivative of 2-alpha-hydroxy-isomotiol into their corresponding glycosides 3-O-(beta-D-glucopyranosyl)-isomotiol, 3-O-(beta-D-glucopyranosyl)-2-alpha-hydroxy-isomotiol, and 3-O-(beta-D-glucopyranosyl)-2-alpha-acetoxy-isomotiol, which then undergo oxidative cleavage under the action of fsoE to form s 2-deacetoxy-fuscoatroside, 2-deacetyl-fuscoatroside, and fuscoatroside, respectively. Although hydroxylation followed by acetylation of 3-O-(beta-D-glucopyranosyl)-isomotiol and 2-deacetoxy-fuscoatroside by fsoD and fsoF could not be ruled out, this process is likely to occur with difficulty due to bulky steric hindrance caused by the presence of a glycan at C3 in these compounds. Interestingly, fsoE can also utilize the aglycones isomotiol and 2-alpha-hydroxy-isomotiol as substrates to generate 19-beta-hydroxy-isomotiol and 2-alpha,19-beta-dihydroxy-isomotiol, respectively. These reactions occur with lower efficiency. Finally, fsoE can further convert 2-alpha,19-beta-dihydroxy-isomotiol into 2-alpha-hydroxy-ismotiol-19-one and 2-alpha-hydroxy-ismotiol-19-one into 2-deacetyl-3-deglucopyranosyl-fuscoatroside. This Humicola fuscoatra protein is Acetyltransferase fsoF.